A 434-amino-acid polypeptide reads, in one-letter code: Putative B3 domain-containing protein Os04g0347400 (434 aa).

3 consecutive DNA-binding regions (TF-B3) follow at residues 27–124 (SFHK…FDTT), 150–246 (KPQF…FGIN), and 326–432 (WIKK…DRVE).

The protein resides in the nucleus. The chain is Putative B3 domain-containing protein Os04g0347400 from Oryza sativa subsp. japonica (Rice).